The sequence spans 429 residues: Probable M18 family aminopeptidase 2 (429 aa).

Residues His82, His156, and His401 each coordinate Zn(2+).

It belongs to the peptidase M18 family. Zn(2+) serves as cofactor.

The chain is Probable M18 family aminopeptidase 2 from Pseudomonas paraeruginosa (strain DSM 24068 / PA7) (Pseudomonas aeruginosa (strain PA7)).